A 123-amino-acid polypeptide reads, in one-letter code: Histone H2B (123 aa).

The segment at 1–30 is disordered; it reads MPPKTSGKAAKKAGKAQKNITKTDKKKKRK. Pro2 carries the post-translational modification N-methylproline; partial. N6-succinyllysine is present on Lys44. Ser110 carries O-linked (GlcNAc) serine glycosylation. N6-succinyllysine is present on residues Lys114 and Lys118. A Glycyl lysine isopeptide (Lys-Gly) (interchain with G-Cter in ubiquitin) cross-link involves residue Lys118.

Belongs to the histone H2B family. In terms of assembly, the nucleosome is a histone octamer containing two molecules each of H2A, H2B, H3 and H4 assembled in one H3-H4 heterotetramer and two H2A-H2B heterodimers. The octamer wraps approximately 147 bp of DNA. In terms of processing, phosphorylated by the catalytic component of the Dbf4-dependent kinase (DDK) complex Cdc7. Post-translationally, monoubiquitination of Lys-118 by Bre1 gives a specific tag for epigenetic transcriptional activation and is also prerequisite for histone H3 'Lys-4' and 'Lys-79' methylation. Deubiquitination of Lys-118 by the SAGA complex is involved in activating transcription of a large subset of genes. Methylation at Pro-2 increases upon heat shock. In terms of processing, glcNAcylation at Ser-110 promotes monoubiquitination of Lys-118. It fluctuates in response to extracellular glucose, and associates with transcribed genes.

The protein resides in the nucleus. It localises to the chromosome. Its function is as follows. Core component of nucleosome. Nucleosomes wrap and compact DNA into chromatin, limiting DNA accessibility to the cellular machineries which require DNA as a template. Histones thereby play a central role in transcription regulation, DNA repair, DNA replication and chromosomal stability. DNA accessibility is regulated via a complex set of post-translational modifications of histones, also called histone code, and nucleosome remodeling. In Drosophila erecta (Fruit fly), this protein is Histone H2B (His2B).